Consider the following 233-residue polypeptide: Orotidine 5'-phosphate decarboxylase (233 aa).

Residues aspartate 11, lysine 33, 60–69 (DLKFHDIPNT), threonine 120, arginine 181, glutamine 190, glycine 210, and arginine 211 each bind substrate. The Proton donor role is filled by lysine 62.

Belongs to the OMP decarboxylase family. Type 1 subfamily. Homodimer.

The catalysed reaction is orotidine 5'-phosphate + H(+) = UMP + CO2. It functions in the pathway pyrimidine metabolism; UMP biosynthesis via de novo pathway; UMP from orotate: step 2/2. Functionally, catalyzes the decarboxylation of orotidine 5'-monophosphate (OMP) to uridine 5'-monophosphate (UMP). In Vibrio campbellii (strain ATCC BAA-1116), this protein is Orotidine 5'-phosphate decarboxylase.